The chain runs to 158 residues: MRCPSCGSLDTQVKDSRPTEDSSVIRRRRVCLTCNFRFTTFERVQLRELTVIKRNGRRVPFDRDKLVRSLQISLRKRPVETERLEKMVSTIVRELESSGEAEISSEMIGEIVMENLRQLDDVAYVRFASVYRNFREAKDFETVLGELSDEGLPTNVRK.

The disordered stretch occupies residues 1–20 (MRCPSCGSLDTQVKDSRPTE). Residues 3–34 (CPSCGSLDTQVKDSRPTEDSSVIRRRRVCLTC) fold into a zinc finger. In terms of domain architecture, ATP-cone spans 49–139 (LTVIKRNGRR…VYRNFREAKD (91 aa)).

Belongs to the NrdR family. Requires Zn(2+) as cofactor.

In terms of biological role, negatively regulates transcription of bacterial ribonucleotide reductase nrd genes and operons by binding to NrdR-boxes. The protein is Transcriptional repressor NrdR of Afipia carboxidovorans (strain ATCC 49405 / DSM 1227 / KCTC 32145 / OM5) (Oligotropha carboxidovorans).